Consider the following 121-residue polypeptide: LOB domain-containing protein 24 (121 aa).

The LOB domain occupies 4 to 105; that stretch reads KRCAACKYLR…NELAKTQAEI (102 aa).

Belongs to the LOB domain-containing protein family.

The sequence is that of LOB domain-containing protein 24 (LBD24) from Arabidopsis thaliana (Mouse-ear cress).